Reading from the N-terminus, the 126-residue chain is Large ribosomal subunit protein bL17 (126 aa).

Belongs to the bacterial ribosomal protein bL17 family. In terms of assembly, part of the 50S ribosomal subunit. Contacts protein L32.

The protein is Large ribosomal subunit protein bL17 of Xylella fastidiosa (strain 9a5c).